The sequence spans 166 residues: UPF0304 protein VP0990 (166 aa).

Belongs to the UPF0304 family.

In Vibrio parahaemolyticus serotype O3:K6 (strain RIMD 2210633), this protein is UPF0304 protein VP0990.